The following is a 262-amino-acid chain: Acyl-[acyl-carrier-protein]--UDP-N-acetylglucosamine O-acyltransferase (262 aa).

It belongs to the transferase hexapeptide repeat family. LpxA subfamily. As to quaternary structure, homotrimer.

The protein resides in the cytoplasm. The enzyme catalyses a (3R)-hydroxyacyl-[ACP] + UDP-N-acetyl-alpha-D-glucosamine = a UDP-3-O-[(3R)-3-hydroxyacyl]-N-acetyl-alpha-D-glucosamine + holo-[ACP]. The protein operates within glycolipid biosynthesis; lipid IV(A) biosynthesis; lipid IV(A) from (3R)-3-hydroxytetradecanoyl-[acyl-carrier-protein] and UDP-N-acetyl-alpha-D-glucosamine: step 1/6. In terms of biological role, involved in the biosynthesis of lipid A, a phosphorylated glycolipid that anchors the lipopolysaccharide to the outer membrane of the cell. In Salmonella heidelberg (strain SL476), this protein is Acyl-[acyl-carrier-protein]--UDP-N-acetylglucosamine O-acyltransferase.